The chain runs to 487 residues: NADH-quinone oxidoreductase subunit N (487 aa).

14 consecutive transmembrane segments (helical) span residues 8-28 (LLALLPLLLTTGAMVALMLAI), 37-57 (AFVVTIAGLNLALFSLPIVMA), 71-91 (GYAVFYMGLVLIGALATCTFG), 104-124 (EFYLLLLIATAGGLVLAGSRH), 125-145 (LASLFIGIEMLTLPMFGLVGY), 159-179 (YMVLSAAATAFLLFGMALLYA), 203-223 (LMGGLGLMLVGFAFKLSLAPF), 235-255 (PAPVATFLATVSKIAVFCVLL), 269-289 (IHWLLAAMAVISIVIGNLLAL), 303-323 (ISHFGYLLAVIVASRLGQMPV), 327-347 (GVYLLMYLFTSLGAFGVISMM), 374-394 (AVLTVMMLSLAGIPMTLGFIG), 408-427 (WWLSGAIVLGSALGLYYYLR), and 449-469 (AITSGGLVVLLSAALVVALGL).

It belongs to the complex I subunit 2 family. As to quaternary structure, NDH-1 is composed of 14 different subunits. Subunits NuoA, H, J, K, L, M, N constitute the membrane sector of the complex.

Its subcellular location is the cell inner membrane. The enzyme catalyses a quinone + NADH + 5 H(+)(in) = a quinol + NAD(+) + 4 H(+)(out). In terms of biological role, NDH-1 shuttles electrons from NADH, via FMN and iron-sulfur (Fe-S) centers, to quinones in the respiratory chain. The immediate electron acceptor for the enzyme in this species is believed to be ubiquinone. Couples the redox reaction to proton translocation (for every two electrons transferred, four hydrogen ions are translocated across the cytoplasmic membrane), and thus conserves the redox energy in a proton gradient. This chain is NADH-quinone oxidoreductase subunit N, found in Aeromonas hydrophila subsp. hydrophila (strain ATCC 7966 / DSM 30187 / BCRC 13018 / CCUG 14551 / JCM 1027 / KCTC 2358 / NCIMB 9240 / NCTC 8049).